A 419-amino-acid polypeptide reads, in one-letter code: Probable sodium/metabolite cotransporter BASS2, chloroplastic (419 aa).

The transit peptide at 1 to 45 (MAASTTCPARSMASVSRALRPRPHAAIASAAVRTAARLGGGLGIV) directs the protein to the chloroplast. The next 9 membrane-spanning stretches (helical) occupy residues 106 to 126 (IVEL…IIGI), 137 to 157 (TDLF…TLTF), 170 to 190 (VGVG…AIAM), 194 to 214 (LSAP…GQAS), 225 to 245 (VALS…MTPL), 259 to 279 (AAGL…VGVL), 291 to 311 (IISI…ASPI), 323 to 343 (GQLI…GYWL), and 384 to 404 (VPSA…AVFW).

The protein belongs to the bile acid:sodium symporter (BASS) (TC 2.A.28) family.

It is found in the membrane. Its subcellular location is the plastid. It localises to the chloroplast envelope. Functionally, may function as sodium-coupled metabolite transporter across the chloroplast envelope. The protein is Probable sodium/metabolite cotransporter BASS2, chloroplastic (BASS2) of Oryza sativa subsp. japonica (Rice).